The following is a 210-amino-acid chain: MSKLKIDTKRRFSLLIALVLIISLSSCATTQTNVTAITTKTVFNQETTYHNLLKLKKWQANGVIGIIYDNQAESANYTYLQDGDNFSIKLYGPLGIGSIEIKGDTNSVSLANSKGQKLTAKDAKTLMLEQLGWYVPVEGLKYWIKAIAIPNIRQTSELNTNNLLSKLSQNGWSISYSNYQLVDSKYPLPTKIRMSRDNLTLKIVIKSWQI.

Residues 1–26 form the signal peptide; the sequence is MSKLKIDTKRRFSLLIALVLIISLSS. Residue Cys-27 is the site of N-palmitoyl cysteine attachment. A lipid anchor (S-diacylglycerol cysteine) is attached at Cys-27.

It belongs to the LolB family. As to quaternary structure, monomer.

The protein resides in the cell outer membrane. In terms of biological role, plays a critical role in the incorporation of lipoproteins in the outer membrane after they are released by the LolA protein. The polypeptide is Outer-membrane lipoprotein LolB (Francisella tularensis subsp. novicida (strain U112)).